A 341-amino-acid polypeptide reads, in one-letter code: S-adenosylmethionine:tRNA ribosyltransferase-isomerase (341 aa).

It belongs to the QueA family. In terms of assembly, monomer.

The protein resides in the cytoplasm. It carries out the reaction 7-aminomethyl-7-carbaguanosine(34) in tRNA + S-adenosyl-L-methionine = epoxyqueuosine(34) in tRNA + adenine + L-methionine + 2 H(+). It participates in tRNA modification; tRNA-queuosine biosynthesis. Functionally, transfers and isomerizes the ribose moiety from AdoMet to the 7-aminomethyl group of 7-deazaguanine (preQ1-tRNA) to give epoxyqueuosine (oQ-tRNA). The sequence is that of S-adenosylmethionine:tRNA ribosyltransferase-isomerase from Pelotomaculum thermopropionicum (strain DSM 13744 / JCM 10971 / SI).